Here is a 238-residue protein sequence, read N- to C-terminus: 3-dehydroquinate dehydratase (238 aa).

3-dehydroquinate is bound by residues 35-37 (ELR) and Arg70. Residue His133 is the Proton donor/acceptor of the active site. The active-site Schiff-base intermediate with substrate is Lys160. The 3-dehydroquinate site is built by Arg202 and Gln225.

Belongs to the type-I 3-dehydroquinase family. As to quaternary structure, homodimer.

It carries out the reaction 3-dehydroquinate = 3-dehydroshikimate + H2O. It participates in metabolic intermediate biosynthesis; chorismate biosynthesis; chorismate from D-erythrose 4-phosphate and phosphoenolpyruvate: step 3/7. Involved in the third step of the chorismate pathway, which leads to the biosynthesis of aromatic amino acids. Catalyzes the cis-dehydration of 3-dehydroquinate (DHQ) and introduces the first double bond of the aromatic ring to yield 3-dehydroshikimate. This is 3-dehydroquinate dehydratase from Staphylococcus aureus (strain MRSA252).